We begin with the raw amino-acid sequence, 828 residues long: Periplasmic nitrate reductase (828 aa).

The tat-type signal signal peptide spans 1–31 (MKLSRRSFMKANAVAAAAAAAGLSVPGVARA). The 57-residue stretch at 39–95 (IKWDKAPCRFCGTGCGVLVGTQQGRVVACQGDPDAPVNRGLNCIKGYFLPKIMYGKD) folds into the 4Fe-4S Mo/W bis-MGD-type domain. Residues Cys46, Cys49, Cys53, and Cys81 each coordinate [4Fe-4S] cluster. Residues Lys83, Gln150, Asn175, Cys179, 212 to 219 (WGANMAEM), 243 to 247 (STYQH), 262 to 264 (QSD), Met372, Gln376, Asn482, 508 to 509 (SD), Lys531, Asp558, and 718 to 727 (TGRVLEHWHT) contribute to the Mo-bis(molybdopterin guanine dinucleotide) site. Phe794 serves as a coordination point for substrate. 2 residues coordinate Mo-bis(molybdopterin guanine dinucleotide): Asn802 and Lys819.

The protein belongs to the prokaryotic molybdopterin-containing oxidoreductase family. NasA/NapA/NarB subfamily. As to quaternary structure, component of the periplasmic nitrate reductase NapAB complex composed of NapA and NapB. Requires [4Fe-4S] cluster as cofactor. It depends on Mo-bis(molybdopterin guanine dinucleotide) as a cofactor. In terms of processing, predicted to be exported by the Tat system. The position of the signal peptide cleavage has not been experimentally proven.

It localises to the periplasm. It catalyses the reaction 2 Fe(II)-[cytochrome] + nitrate + 2 H(+) = 2 Fe(III)-[cytochrome] + nitrite + H2O. Functionally, catalytic subunit of the periplasmic nitrate reductase complex NapAB. Receives electrons from NapB and catalyzes the reduction of nitrate to nitrite. The chain is Periplasmic nitrate reductase from Shigella boydii serotype 18 (strain CDC 3083-94 / BS512).